Consider the following 236-residue polypeptide: Probable chemoreceptor glutamine deamidase CheD (236 aa).

Residues 1 to 20 are disordered; that stretch reads MIEFGKRATPQSAADAVRGD.

This sequence belongs to the CheD family.

The catalysed reaction is L-glutaminyl-[protein] + H2O = L-glutamyl-[protein] + NH4(+). Functionally, probably deamidates glutamine residues to glutamate on methyl-accepting chemotaxis receptors (MCPs), playing an important role in chemotaxis. In Ralstonia pickettii (strain 12J), this protein is Probable chemoreceptor glutamine deamidase CheD.